The following is a 335-amino-acid chain: MKLPARVFFTLGSRLPCGLAPRRFFSYGTKILYQNTEALQSKFFSPLQKAMLPPNSFQGKVAFITGGGTGLGKGMTTLLSSLGAQCVIASRKMDVLKATAEQISSQTGNKVHAIQCDVRDPDMVQNTVSELIKVAGHPNIVINNAAGNFISPTERLSPNAWKTITDIVLNGTAFVTLEIGKQLIKAQKGAAFLSITTIYAETGSGFVVPSASAKAGVEAMSKSLAAEWGKYGMRFNVIQPGPIKTKGAFSRLDPTGTFEKEMIGRIPCGRLGTVEELANLAAFLCSDYASWINGAVIKFDGGEEVLISGEFNDLRKVTKEQWDTIEELIRKTKGS.

A mitochondrion-targeting transit peptide spans 1–34 (MKLPARVFFTLGSRLPCGLAPRRFFSYGTKILYQ). 2 positions are modified to N6-acetyllysine; alternate: Lys42 and Lys49. 2 positions are modified to N6-succinyllysine; alternate: Lys42 and Lys49. NADP(+) is bound at residue 66–71 (GGGTGL). Thr69 carries the post-translational modification Phosphothreonine. Lys73 carries the N6-succinyllysine modification. Arg91 provides a ligand contact to NADP(+). Arg91 is a binding site for substrate. An N6-acetyllysine; alternate modification is found at Lys97. Residue Lys97 is modified to N6-succinyllysine; alternate. Asp117 is an NADP(+) binding site. Positions 119, 149, and 157 each coordinate substrate. Tyr199 serves as the catalytic Proton acceptor. Lys214 is an NADP(+) binding site. Position 230 is an N6-acetyllysine (Lys230). 240 to 243 (PGPI) contributes to the NADP(+) binding site. Lys244 carries the post-translational modification N6-acetyllysine; alternate. At Lys244 the chain carries N6-succinyllysine; alternate. Substrate is bound at residue Arg251. N6-acetyllysine; alternate is present on residues Lys260 and Lys319. An N6-succinyllysine; alternate mark is found at Lys260 and Lys319.

The protein belongs to the short-chain dehydrogenases/reductases (SDR) family. 2,4-dienoyl-CoA reductase subfamily. Homotetramer. As to expression, heart = liver = pancreas &gt; kidney &gt;&gt; skeletal muscle = lung.

The protein resides in the mitochondrion. It catalyses the reaction a (2E,4E)-dienoyl-CoA + NADPH + H(+) = a 4,5-saturated-(3E)-enoyl-CoA + NADP(+). The catalysed reaction is a (2E,4Z)-dienoyl-CoA + NADPH + H(+) = a 4,5-saturated-(3E)-enoyl-CoA + NADP(+). It carries out the reaction (2E,4E)-hexadienoyl-CoA + NADPH + H(+) = (3E)-hexenoyl-CoA + NADP(+). Auxiliary enzyme of beta-oxidation. It participates in the metabolism of unsaturated fatty enoyl-CoA esters having double bonds in both even- and odd-numbered positions in mitochondria. Catalyzes the NADP-dependent reduction of 2,4-dienoyl-CoA to yield trans-3-enoyl-CoA. The protein is 2,4-dienoyl-CoA reductase [(3E)-enoyl-CoA-producing], mitochondrial (DECR1) of Homo sapiens (Human).